The following is a 256-amino-acid chain: MSHPDLFSLSGARALVTGASRGIGLTLAKGLARYGAEVVLNGRNAESLDSAQSGFEAEGLKASTAVFDVTDQDAVIDGVAAIERDMGPIDILINNAGIQRRAPLEEFSRKDWDDLMSTNVNAVFFVGQAVARHMIPRGRGKIVNICSVQSELARPGIAPYTATKGAVKNLTKGMATDWGRHGLQINGLAPGYFATEMTERLVADEEFTDWLCKRTPAGRWGQVEELVGAAVFLSSRASSFVNGQVLMVDGGITVSL.

15-39 (LVTGASRGIGLTLAKGLARYGAEVV) is an NADP(+) binding site. A substrate-binding site is contributed by Ser147. Tyr160 (proton acceptor) is an active-site residue.

Belongs to the short-chain dehydrogenases/reductases (SDR) family. Homodimer.

It localises to the cytoplasm. It carries out the reaction D-gluconate + NADP(+) = 5-dehydro-D-gluconate + NADPH + H(+). In terms of biological role, catalyzes the reversible NADP-dependent oxidation of gluconate to 5-ketogluconate. Is involved in the non-phosphorylative, ketogenic oxidation of glucose. Is almost inactive with NAD as cosubstrate. Displays high substrate specificity since D-Glucose, D-sorbitol, and D-mannitol are not oxidized by the enzyme, and 2-ketogluconate and L-sorbose are not reduced. Can accept D-fructose as a substrate, with a rate that is only 10% of the rate of 5-ketogluconate reduction. This chain is Gluconate 5-dehydrogenase, found in Gluconobacter oxydans (strain 621H) (Gluconobacter suboxydans).